A 377-amino-acid polypeptide reads, in one-letter code: tRNA-specific 2-thiouridylase MnmA (377 aa).

ATP is bound by residues Gly8–Ser15 and Met34. Positions Asn94 to Asp96 are interaction with target base in tRNA. Cys99 (nucleophile) is an active-site residue. An intrachain disulfide couples Cys99 to Cys201. ATP is bound at residue Gly123. The interval Lys151–Gln153 is interaction with tRNA. Cys201 functions as the Cysteine persulfide intermediate in the catalytic mechanism. Residues Arg315 to Tyr316 are interaction with tRNA.

This sequence belongs to the MnmA/TRMU family.

The protein resides in the cytoplasm. It catalyses the reaction S-sulfanyl-L-cysteinyl-[protein] + uridine(34) in tRNA + AH2 + ATP = 2-thiouridine(34) in tRNA + L-cysteinyl-[protein] + A + AMP + diphosphate + H(+). Functionally, catalyzes the 2-thiolation of uridine at the wobble position (U34) of tRNA, leading to the formation of s(2)U34. This Acinetobacter baumannii (strain ACICU) protein is tRNA-specific 2-thiouridylase MnmA.